The chain runs to 299 residues: Regucalcin (299 aa).

A divalent metal cation is bound at residue Glu-18. Residues Arg-101, Asn-103, and Glu-121 each contribute to the substrate site. Lys-144 bears the N6-succinyllysine mark. Residues Asn-154 and Asp-204 each contribute to the a divalent metal cation site. Asp-204 serves as the catalytic Proton donor/acceptor. 2 positions are modified to N6-succinyllysine: Lys-244 and Lys-253.

This sequence belongs to the SMP-30/CGR1 family. Monomer. Zn(2+) is required as a cofactor. Mn(2+) serves as cofactor. The cofactor is Ca(2+). It depends on Mg(2+) as a cofactor.

The protein resides in the cytoplasm. The enzyme catalyses D-glucono-1,5-lactone + H2O = D-gluconate + H(+). Gluconolactonase with low activity towards other sugar lactones, including gulonolactone and galactonolactone. Can also hydrolyze diisopropyl phosphorofluoridate and phenylacetate (in vitro). Calcium-binding protein. Modulates Ca(2+) signaling, and Ca(2+)-dependent cellular processes and enzyme activities. This Homo sapiens (Human) protein is Regucalcin (RGN).